Here is a 222-residue protein sequence, read N- to C-terminus: MDPTLSLNGDPNIGVYARVFEDLAVVPVEAPKEFRDKIAEALDVEVIETFVQGSSVIGLLLTGNSRGFVVSGLIQDSELEILQEYGDCLLLGEEMNAAGNVILTNDSFAVVHPDMSSAMREMVADFLKVKIIPMSFAGVGTVGMTCACTNTGVLLPARSTPEEIEKLERSIDDANVAIGTGSVNMGSGLIGTGLLINSKGYLAGNATTGYELGRIEDVFGFL.

It belongs to the eIF-6 family.

In terms of biological role, binds to the 50S ribosomal subunit and prevents its association with the 30S ribosomal subunit to form the 70S initiation complex. This Methanocorpusculum labreanum (strain ATCC 43576 / DSM 4855 / Z) protein is Translation initiation factor 6.